A 237-amino-acid polypeptide reads, in one-letter code: LexA repressor (237 aa).

Residues F26–T46 constitute a DNA-binding region (H-T-H motif). Residues S158 and K196 each act as for autocatalytic cleavage activity in the active site.

It belongs to the peptidase S24 family. In terms of assembly, homodimer.

It catalyses the reaction Hydrolysis of Ala-|-Gly bond in repressor LexA.. Represses a number of genes involved in the response to DNA damage (SOS response), including recA and lexA. In the presence of single-stranded DNA, RecA interacts with LexA causing an autocatalytic cleavage which disrupts the DNA-binding part of LexA, leading to derepression of the SOS regulon and eventually DNA repair. The sequence is that of LexA repressor from Rhodospirillum centenum (strain ATCC 51521 / SW).